Here is a 309-residue protein sequence, read N- to C-terminus: Olfactory receptor 7A10 (309 aa).

Topologically, residues M1–A25 are extracellular. N5 carries N-linked (GlcNAc...) asparagine glycosylation. A helical membrane pass occupies residues F26–I46. Over L47–H54 the chain is Cytoplasmic. The helical transmembrane segment at L55–S75 threads the bilayer. The Extracellular segment spans residues T76–T99. A disulfide bridge connects residues C97 and C189. A helical membrane pass occupies residues Q100–Y120. Residues D121–Q139 lie on the Cytoplasmic side of the membrane. Residues L140–S160 form a helical membrane-spanning segment. Residues L161–I197 are Extracellular-facing. A helical transmembrane segment spans residues V198 to S217. Topologically, residues Y218 to A237 are cytoplasmic. The chain crosses the membrane as a helical span at residues F238 to V258. Topologically, residues Y259–G271 are extracellular. A helical transmembrane segment spans residues A272–L292. Residues R293 to Q309 are Cytoplasmic-facing.

Belongs to the G-protein coupled receptor 1 family.

Its subcellular location is the cell membrane. Its function is as follows. Odorant receptor. This Homo sapiens (Human) protein is Olfactory receptor 7A10 (OR7A10).